We begin with the raw amino-acid sequence, 215 residues long: Protein HP-25 homolog 2 (215 aa).

Residues methionine 1 to alanine 30 form the signal peptide. A disordered region spans residues valine 35–glutamate 79. The region spanning glycine 43 to glycine 76 is the Collagen-like domain. Over residues proline 45 to leucine 68 the composition is skewed to pro residues. The 134-residue stretch at leucine 82 to glycine 215 folds into the C1q domain.

It localises to the secreted. The polypeptide is Protein HP-25 homolog 2 (Bos taurus (Bovine)).